Reading from the N-terminus, the 206-residue chain is MPFMPVPYVIEQTHRGERSYDIISRLLKDRIVMLGTEIDDDVANVIVAQLLFLESEDPDKDINLYINSPGGSVTAGLAIYDTMQYVKCPVSTICVGQAASMGAVLLLAGAKGKRYALPSSRIMIHQPLGGVRGQATDIEIQAKEILRMKAKLNELIVKHTGQSIERVEKDTDRDYFMGASEAKAYGIIDEIQNPRKVVGLGKEEKK.

S100 functions as the Nucleophile in the catalytic mechanism. The active site involves H125.

It belongs to the peptidase S14 family. As to quaternary structure, fourteen ClpP subunits assemble into 2 heptameric rings which stack back to back to give a disk-like structure with a central cavity, resembling the structure of eukaryotic proteasomes.

It localises to the cytoplasm. It catalyses the reaction Hydrolysis of proteins to small peptides in the presence of ATP and magnesium. alpha-casein is the usual test substrate. In the absence of ATP, only oligopeptides shorter than five residues are hydrolyzed (such as succinyl-Leu-Tyr-|-NHMec, and Leu-Tyr-Leu-|-Tyr-Trp, in which cleavage of the -Tyr-|-Leu- and -Tyr-|-Trp bonds also occurs).. Cleaves peptides in various proteins in a process that requires ATP hydrolysis. Has a chymotrypsin-like activity. Plays a major role in the degradation of misfolded proteins. In Myxococcus xanthus, this protein is ATP-dependent Clp protease proteolytic subunit 2.